The chain runs to 153 residues: Two-component response regulator ARR17 (153 aa).

The Response regulatory domain occupies H21–L149. Residue D82 is modified to 4-aspartylphosphate.

It belongs to the ARR family. Type-A subfamily. Two-component system major event consists of a His-to-Asp phosphorelay between a sensor histidine kinase (HK) and a response regulator (RR). In plants, the His-to-Asp phosphorelay involves an additional intermediate named Histidine-containing phosphotransfer protein (HPt). This multistep phosphorelay consists of a His-Asp-His-Asp sequential transfer of a phosphate group between first a His and an Asp of the HK protein, followed by the transfer to a conserved His of the HPt protein and finally the transfer to an Asp in the receiver domain of the RR protein.

The protein localises to the nucleus. Its function is as follows. Functions as a response regulator involved in His-to-Asp phosphorelay signal transduction system. Phosphorylation of the Asp residue in the receiver domain activates the ability of the protein to promote the transcription of target genes. Type-A response regulators seem to act as negative regulators of the cytokinin signaling. The protein is Two-component response regulator ARR17 (ARR17) of Arabidopsis thaliana (Mouse-ear cress).